We begin with the raw amino-acid sequence, 83 residues long: Large ribosomal subunit protein eL43 (83 aa).

Zn(2+) is bound by residues Cys38, Cys41, Cys56, and Cys59. Residues 38–59 form a C4-type zinc finger; the sequence is CPVCGRKAVKRISTGIWQCQKC.

Belongs to the eukaryotic ribosomal protein eL43 family. Putative zinc-binding subfamily. Part of the 50S ribosomal subunit. It depends on Zn(2+) as a cofactor.

Binds to the 23S rRNA. This chain is Large ribosomal subunit protein eL43, found in Pyrococcus furiosus (strain ATCC 43587 / DSM 3638 / JCM 8422 / Vc1).